Consider the following 346-residue polypeptide: Anthocyanidin 3-O-glucosyltransferase 2 (346 aa).

The UDP-alpha-D-glucose site is built by alanine 221, glutamine 223, histidine 238, tryptophan 241, asparagine 242, serine 243, and glutamate 246. Alanine 261 provides a ligand contact to an anthocyanidin. Residues glutamate 262 and glutamine 263 each coordinate UDP-alpha-D-glucose.

This sequence belongs to the UDP-glycosyltransferase family. In terms of tissue distribution, expressed in cotyledons, roots and leaves.

The enzyme catalyses an anthocyanidin + UDP-alpha-D-glucose + H(+) = an anthocyanidin 3-O-beta-D-glucoside + UDP. It functions in the pathway pigment biosynthesis; anthocyanin biosynthesis. Its function is as follows. In the presence of other necessary color factors, this glycosylation reaction allows the accumulation of anthocyanin pigments. The chain is Anthocyanidin 3-O-glucosyltransferase 2 (GT2) from Manihot esculenta (Cassava).